We begin with the raw amino-acid sequence, 200 residues long: 3-isopropylmalate dehydratase small subunit (200 aa).

This sequence belongs to the LeuD family. LeuD type 1 subfamily. Heterodimer of LeuC and LeuD.

It catalyses the reaction (2R,3S)-3-isopropylmalate = (2S)-2-isopropylmalate. It participates in amino-acid biosynthesis; L-leucine biosynthesis; L-leucine from 3-methyl-2-oxobutanoate: step 2/4. Catalyzes the isomerization between 2-isopropylmalate and 3-isopropylmalate, via the formation of 2-isopropylmaleate. This is 3-isopropylmalate dehydratase small subunit from Vibrio atlanticus (strain LGP32) (Vibrio splendidus (strain Mel32)).